The chain runs to 333 residues: Ornithine carbamoyltransferase (333 aa).

Residues 57–60, Gln-83, Arg-107, and 134–137 contribute to the carbamoyl phosphate site; these read STRT and HPTQ. Residues Asn-168, Asp-232, and 236 to 237 each bind L-ornithine; that span reads SM. Residues 274-275 and Arg-319 contribute to the carbamoyl phosphate site; that span reads CL.

Belongs to the aspartate/ornithine carbamoyltransferase superfamily. OTCase family.

It localises to the cytoplasm. The enzyme catalyses carbamoyl phosphate + L-ornithine = L-citrulline + phosphate + H(+). The protein operates within amino-acid biosynthesis; L-arginine biosynthesis; L-arginine from L-ornithine and carbamoyl phosphate: step 1/3. Functionally, reversibly catalyzes the transfer of the carbamoyl group from carbamoyl phosphate (CP) to the N(epsilon) atom of ornithine (ORN) to produce L-citrulline. The chain is Ornithine carbamoyltransferase from Photobacterium profundum (strain SS9).